A 152-amino-acid chain; its full sequence is Xanthine-guanine phosphoribosyltransferase (152 aa).

Residues arginine 37 to glycine 38, arginine 69, and aspartate 88 to threonine 96 contribute to the 5-phospho-alpha-D-ribose 1-diphosphate site. Arginine 69 lines the GMP pocket. Residue aspartate 89 coordinates Mg(2+). Guanine is bound by residues aspartate 92 and isoleucine 135. Residues aspartate 92 and isoleucine 135 each contribute to the xanthine site. Residues aspartate 92–threonine 96 and tryptophan 134–isoleucine 135 each bind GMP.

This sequence belongs to the purine/pyrimidine phosphoribosyltransferase family. XGPT subfamily. As to quaternary structure, homotetramer. The cofactor is Mg(2+).

The protein resides in the cell inner membrane. It catalyses the reaction GMP + diphosphate = guanine + 5-phospho-alpha-D-ribose 1-diphosphate. The catalysed reaction is XMP + diphosphate = xanthine + 5-phospho-alpha-D-ribose 1-diphosphate. It carries out the reaction IMP + diphosphate = hypoxanthine + 5-phospho-alpha-D-ribose 1-diphosphate. It functions in the pathway purine metabolism; GMP biosynthesis via salvage pathway; GMP from guanine: step 1/1. Its pathway is purine metabolism; XMP biosynthesis via salvage pathway; XMP from xanthine: step 1/1. In terms of biological role, purine salvage pathway enzyme that catalyzes the transfer of the ribosyl-5-phosphate group from 5-phospho-alpha-D-ribose 1-diphosphate (PRPP) to the N9 position of the 6-oxopurines guanine and xanthine to form the corresponding ribonucleotides GMP (guanosine 5'-monophosphate) and XMP (xanthosine 5'-monophosphate), with the release of PPi. To a lesser extent, also acts on hypoxanthine. The protein is Xanthine-guanine phosphoribosyltransferase of Aliivibrio salmonicida (strain LFI1238) (Vibrio salmonicida (strain LFI1238)).